Here is a 331-residue protein sequence, read N- to C-terminus: MTAATAPDGRRMLRLEVRNAETPIERKPGWIKTTARMGPEYQALQQLVKTEDLHTVCQEAACPNIYECWEDREATFLIGGSQCTRRCDFCQIDTGKPADYDTDEPRRVADSVRRMGLRYATVTGVARDDLPDEGAWLHAETVRRIHADNPGTGVEILATDFSGNPDLLAEVFSSRPEVFAHNVETVPRIFKRIRPAFRYERSLDVITQARDAGLITKSNLILGMGETRDEVSEALVDLHDAGCDIITVTQYLRPSPRHLPVARWVRPEEFVEIKAEAEAIGFLGVLAGPLVRSSYRAGRLYAQSMRAKGRELPEGLAHLADPANGFAQAVG.

[4Fe-4S] cluster contacts are provided by Cys-57, Cys-62, Cys-68, Cys-83, Cys-87, Cys-90, and Ser-294. The Radical SAM core domain maps to 69-283 (WEDREATFLI…KAEAEAIGFL (215 aa)).

Belongs to the radical SAM superfamily. Lipoyl synthase family. [4Fe-4S] cluster serves as cofactor.

Its subcellular location is the cytoplasm. It carries out the reaction [[Fe-S] cluster scaffold protein carrying a second [4Fe-4S](2+) cluster] + N(6)-octanoyl-L-lysyl-[protein] + 2 oxidized [2Fe-2S]-[ferredoxin] + 2 S-adenosyl-L-methionine + 4 H(+) = [[Fe-S] cluster scaffold protein] + N(6)-[(R)-dihydrolipoyl]-L-lysyl-[protein] + 4 Fe(3+) + 2 hydrogen sulfide + 2 5'-deoxyadenosine + 2 L-methionine + 2 reduced [2Fe-2S]-[ferredoxin]. The protein operates within protein modification; protein lipoylation via endogenous pathway; protein N(6)-(lipoyl)lysine from octanoyl-[acyl-carrier-protein]: step 2/2. Its function is as follows. Catalyzes the radical-mediated insertion of two sulfur atoms into the C-6 and C-8 positions of the octanoyl moiety bound to the lipoyl domains of lipoate-dependent enzymes, thereby converting the octanoylated domains into lipoylated derivatives. The sequence is that of Lipoyl synthase from Clavibacter michiganensis subsp. michiganensis (strain NCPPB 382).